The chain runs to 248 residues: Probable phosphatase VS_II0429 (248 aa).

Residues His8, His10, His16, His41, Glu74, His102, His132, Asp194, and His196 each contribute to the Zn(2+) site.

Belongs to the PHP family. The cofactor is Zn(2+).

This chain is Probable phosphatase VS_II0429, found in Vibrio atlanticus (strain LGP32) (Vibrio splendidus (strain Mel32)).